The following is a 159-amino-acid chain: Nucleotide-binding protein Psyr_4087 (159 aa).

This sequence belongs to the YajQ family.

Its function is as follows. Nucleotide-binding protein. The chain is Nucleotide-binding protein Psyr_4087 from Pseudomonas syringae pv. syringae (strain B728a).